Reading from the N-terminus, the 298-residue chain is GTPase Era (298 aa).

The Era-type G domain maps to 8-176 (HCGSVAVIGR…VRDVLKLLPE (169 aa)). The interval 16–23 (GRPNVGKS) is G1. Position 16–23 (16–23 (GRPNVGKS)) interacts with GTP. The tract at residues 42–46 (QTTRH) is G2. The tract at residues 63-66 (DTPG) is G3. GTP contacts are provided by residues 63–67 (DTPGL) and 125–128 (NKID). The G4 stretch occupies residues 125–128 (NKID). The interval 155-157 (ISA) is G5. The region spanning 199–283 (VREQLMRQLG…FLETWVRVRE (85 aa)) is the KH type-2 domain.

This sequence belongs to the TRAFAC class TrmE-Era-EngA-EngB-Septin-like GTPase superfamily. Era GTPase family. As to quaternary structure, monomer.

Its subcellular location is the cytoplasm. It localises to the cell inner membrane. In terms of biological role, an essential GTPase that binds both GDP and GTP, with rapid nucleotide exchange. Plays a role in 16S rRNA processing and 30S ribosomal subunit biogenesis and possibly also in cell cycle regulation and energy metabolism. The protein is GTPase Era of Stenotrophomonas maltophilia (strain K279a).